Reading from the N-terminus, the 555-residue chain is 2-succinyl-5-enolpyruvyl-6-hydroxy-3-cyclohexene-1-carboxylate synthase (555 aa).

This sequence belongs to the TPP enzyme family. MenD subfamily. As to quaternary structure, homodimer. It depends on Mg(2+) as a cofactor. Mn(2+) serves as cofactor. Requires thiamine diphosphate as cofactor.

It carries out the reaction isochorismate + 2-oxoglutarate + H(+) = 5-enolpyruvoyl-6-hydroxy-2-succinyl-cyclohex-3-ene-1-carboxylate + CO2. The protein operates within quinol/quinone metabolism; 1,4-dihydroxy-2-naphthoate biosynthesis; 1,4-dihydroxy-2-naphthoate from chorismate: step 2/7. It functions in the pathway quinol/quinone metabolism; menaquinone biosynthesis. Catalyzes the thiamine diphosphate-dependent decarboxylation of 2-oxoglutarate and the subsequent addition of the resulting succinic semialdehyde-thiamine pyrophosphate anion to isochorismate to yield 2-succinyl-5-enolpyruvyl-6-hydroxy-3-cyclohexene-1-carboxylate (SEPHCHC). The sequence is that of 2-succinyl-5-enolpyruvyl-6-hydroxy-3-cyclohexene-1-carboxylate synthase from Bacteroides thetaiotaomicron (strain ATCC 29148 / DSM 2079 / JCM 5827 / CCUG 10774 / NCTC 10582 / VPI-5482 / E50).